The following is a 311-amino-acid chain: ATP synthase subunit a (311 aa).

6 helical membrane-spanning segments follow: residues 62–82 (AVHV…GFFM), 123–143 (VAPM…MDLI), 179–199 (VTVF…WGFI), 213–233 (FWYF…VALI), 253–273 (IFIL…LGGI), and 276–296 (FGWA…FMVL).

Belongs to the ATPase A chain family. F-type ATPases have 2 components, CF(1) - the catalytic core - and CF(0) - the membrane proton channel. CF(1) has five subunits: alpha(3), beta(3), gamma(1), delta(1), epsilon(1). CF(0) has three main subunits: a(1), b(2) and c(9-12). The alpha and beta chains form an alternating ring which encloses part of the gamma chain. CF(1) is attached to CF(0) by a central stalk formed by the gamma and epsilon chains, while a peripheral stalk is formed by the delta and b chains.

The protein localises to the cell inner membrane. Key component of the proton channel; it plays a direct role in the translocation of protons across the membrane. This is ATP synthase subunit a from Teredinibacter turnerae (strain ATCC 39867 / T7901).